Reading from the N-terminus, the 540-residue chain is Dynein axonemal assembly factor 3 homolog (540 aa).

Positions Ala480–Gly499 are disordered.

The protein belongs to the DNAAF3 family. In terms of tissue distribution, expressed in mechanosensory chordotonal (Ch) neurons, spermatocytes and spermatids (at protein level).

Its subcellular location is the cytoplasm. It localises to the dynein axonemal particle. Required for the assembly of axonemal inner and outer dynein arms. Involved in the cytoplasmic preassembly of dyneins into complexes before their transport into cilia. Essential for the development of axonemal dynein motors in the sensory cilium of mechanosensory chordotonal (Ch) neurons and sperm flagellum, and consequently, is required for the mechanotransduction process of hearing and sperm mobility. In Drosophila melanogaster (Fruit fly), this protein is Dynein axonemal assembly factor 3 homolog.